The sequence spans 557 residues: Intraflagellar transport protein 56 (557 aa).

A disordered region spans residues 1–30 (MLLSRMKPAVGGEASTSSNEKKRKNKSKKI). Residues 21–30 (KKRKNKSKKI) are compositionally biased toward basic residues. 4 TPR repeats span residues 60–93 (EHAD…PDCP), 95–128 (DVWV…LQNR), 154–187 (TEDQ…NREF), and 471–504 (ANDC…EGKR).

The protein belongs to the IFT56 family. As to quaternary structure, component of the IFT complex B.

Its subcellular location is the cell projection. It is found in the cilium. Its function is as follows. Component of the intraflagellar transport (IFT) complex B required for transport of proteins in the motile cilium. Required for transport of specific ciliary cargo proteins related to motility, while it is neither required for IFT complex B assembly or motion nor for cilium assembly. Plays a key role in maintaining the integrity of the IFT complex B and the proper ciliary localization of the IFT complex B components. Essential for maintaining proper microtubule organization within the ciliary axoneme. This chain is Intraflagellar transport protein 56, found in Danio rerio (Zebrafish).